The chain runs to 586 residues: Ezrin (586 aa).

Positions 2 to 295 (PKPINVRVTT…GNHELYMRRR (294 aa)) constitute an FERM domain. Lys60 carries the N6-acetyllysine modification. Positions 115-120 (IYCPPE) match the [IL]-x-C-x-x-[DE] motif motif. Position 146 is a phosphotyrosine; by PDGFR (Tyr146). Positions 244 to 586 (EIRNISFNDK…KQRIDEFEAM (343 aa)) are interaction with SCYL3. The stretch at 302–462 (VQQMKAQARE…QDDLVKTKEE (161 aa)) forms a coiled coil. Residues 306 to 338 (KAQAREEKHQKQLERQQLETEKKRRETVEREKE) form a disordered region. The segment covering 308–338 (QAREEKHQKQLERQQLETEKKRRETVEREKE) has biased composition (basic and acidic residues). The residue at position 366 (Ser366) is a Phosphoserine. Tyr478 carries the post-translational modification Phosphotyrosine. Ser535 is subject to Phosphoserine. Thr567 carries the post-translational modification Phosphothreonine; by ROCK2 and PKC/PRKCI.

In terms of assembly, interacts with PODXL and NHERF2. Found in a complex with EZR, PODXL and NHERF2. Interacts with PALS1. Interacts with MCC, PLEKHG6, SCYL3/PACE1, NHERF1 and TMEM8B. Interacts (when phosphorylated) with FES/FPS. Interacts with dimeric S100P, the interaction may be activating through unmasking of F-actin binding sites. Identified in complexes that contain VIM, EZR, AHNAK, BFSP1, BFSP2, ANK2, PLEC, PRX and spectrin. Detected in a complex composed of at least EZR, AHNAK, PPL and PRX. Interacts with PDPN (via cytoplasmic domain); activates RHOA and promotes epithelial-mesenchymal transition. Interacts with SPN/CD43 cytoplasmic tail, CD44 and ICAM2. Interacts with SLC9A3; interaction targets SLC9A3 to the apical membrane. Interacts with SLC9A1; regulates interactions of SLC9A1 with cytoskeletal and promotes stress fiber formation. Interacts with CLIC5; may work together in a complex which also includes RDX and MYO6 to stabilize linkages between the plasma membrane and subjacent actin cytoskeleton at the base of stereocilia. Phosphorylated by tyrosine-protein kinases. Phosphorylation by ROCK2 suppresses the head-to-tail association of the N-terminal and C-terminal halves resulting in an opened conformation which is capable of actin and membrane-binding. In terms of processing, S-nitrosylation is induced by interferon-gamma and oxidatively-modified low-densitity lipoprotein (LDL(ox)) possibly implicating the iNOS-S100A8/9 transnitrosylase complex. Glomerular epithelium cell (podocyte). Expressed in cerebrum, cerebellum and hippocampus (at protein level). Expressed in the small intestine, lung, kidney and ovaries.

The protein resides in the apical cell membrane. It is found in the cell projection. Its subcellular location is the microvillus membrane. The protein localises to the ruffle membrane. It localises to the cytoplasm. The protein resides in the cell cortex. It is found in the cytoskeleton. Its subcellular location is the microvillus. Its activity is regulated as follows. A head-to-tail association, of the N-terminal and C-terminal halves results in a closed conformation (inactive form) which is incapable of actin or membrane-binding. Probably involved in connections of major cytoskeletal structures to the plasma membrane. In epithelial cells, required for the formation of microvilli and membrane ruffles on the apical pole. Along with PLEKHG6, required for normal macropinocytosis. This chain is Ezrin (Ezr), found in Rattus norvegicus (Rat).